The sequence spans 368 residues: tRNA-specific 2-thiouridylase MnmA (368 aa).

Residues 24-31 and leucine 50 each bind ATP; that span reads AMSGGVDS. Cysteine 117 acts as the Nucleophile in catalysis. A disulfide bond links cysteine 117 and cysteine 213. Glycine 141 is a binding site for ATP. An interaction with tRNA region spans residues 163 to 165; it reads KDQ. Residue cysteine 213 is the Cysteine persulfide intermediate of the active site.

The protein belongs to the MnmA/TRMU family.

The protein localises to the cytoplasm. It catalyses the reaction S-sulfanyl-L-cysteinyl-[protein] + uridine(34) in tRNA + AH2 + ATP = 2-thiouridine(34) in tRNA + L-cysteinyl-[protein] + A + AMP + diphosphate + H(+). Catalyzes the 2-thiolation of uridine at the wobble position (U34) of tRNA, leading to the formation of s(2)U34. This is tRNA-specific 2-thiouridylase MnmA from Wolbachia pipientis subsp. Culex pipiens (strain wPip).